We begin with the raw amino-acid sequence, 53 residues long: ATP synthase protein 8 (53 aa).

A helical membrane pass occupies residues 4–24; sequence MAPISWLLLFIIFSITFILFC.

It belongs to the ATPase protein 8 family. F-type ATPases have 2 components, CF(1) - the catalytic core - and CF(0) - the membrane proton channel.

It localises to the mitochondrion membrane. Its function is as follows. Mitochondrial membrane ATP synthase (F(1)F(0) ATP synthase or Complex V) produces ATP from ADP in the presence of a proton gradient across the membrane which is generated by electron transport complexes of the respiratory chain. F-type ATPases consist of two structural domains, F(1) - containing the extramembraneous catalytic core and F(0) - containing the membrane proton channel, linked together by a central stalk and a peripheral stalk. During catalysis, ATP synthesis in the catalytic domain of F(1) is coupled via a rotary mechanism of the central stalk subunits to proton translocation. Part of the complex F(0) domain. Minor subunit located with subunit a in the membrane. In Drosophila mauritiana (Fruit fly), this protein is ATP synthase protein 8 (mt:ATPase8).